We begin with the raw amino-acid sequence, 320 residues long: MKTALILLCILGMASAFSMKNFHRRIKAEDSEENGVFKYRPRYFLYKHATYFYPPLKRFPVQGGSDSSEENGDGDSSEEEGEEEETSNEEENNEDSEGNEDQEAEAENATLSGVTASYGVETTADAGKLELAALQLPKKAGDAEGKAPKMKESDEEEEEEEEEENENEEAEVDENEQVVNGTSTNSTEVDGGNGPSGGDNGEEAEEASVTEAGAEGTTAGVRELTSYGTTTAVLLNGFQQTTPPPEAYGTTSPPARKSSTVEYGEEYEQIGNEYNTAYETYDENNGEPRGDTYRAYEDEYSYYKGHGYEGYEGQDYYYHQ.

An N-terminal signal peptide occupies residues 1-16 (MKTALILLCILGMASA). 5 positions are modified to phosphoserine: Ser31, Ser68, Ser76, Ser77, and Ser96. 3 disordered regions span residues 60-117 (PVQG…VTAS), 136-225 (LPKK…RELT), and 238-264 (FQQTTPPPEAYGTTSPPARKSSTVEYG). Over residues 67–106 (SSEENGDGDSSEEEGEEEETSNEEENNEDSEGNEDQEAEA) the composition is skewed to acidic residues. N-linked (GlcNAc...) asparagine glycosylation occurs at Asn108. Over residues 139–152 (KAGDAEGKAPKMKE) the composition is skewed to basic and acidic residues. Ser153 carries the phosphoserine modification. Positions 153 to 176 (SDEEEEEEEEEENENEEAEVDENE) are enriched in acidic residues. 2 stretches are compositionally biased toward polar residues: residues 177–188 (QVVNGTSTNSTE) and 249–261 (GTTSPPARKSSTV). Asn180 and Asn185 each carry an N-linked (GlcNAc...) asparagine glycan. The Integrin-binding motif motif lies at 289-291 (RGD). 2 positions are modified to sulfotyrosine: Tyr316 and Tyr317.

Monomer. Interacts with integrins; the interaction promotes cell adhesion.

It is found in the secreted. In terms of biological role, binds tightly to hydroxyapatite. Appears to form an integral part of the mineralized matrix. Probably important to cell-matrix interaction. Promotes adhesion and migration of various cells via the alpha-V/beta-3 integrin receptor (ITGAV:ITGB3). This Rattus norvegicus (Rat) protein is Integrin-binding sialoprotein (Ibsp).